Here is a 380-residue protein sequence, read N- to C-terminus: Cytochrome b (380 aa).

Transmembrane regions (helical) follow at residues 34–54, 78–100, 113–133, and 179–199; these read FGSLLGLFLTMQIITGIILAM, WLMRTMHMNGAAFMFICMYAHMG, TWNIGIIIMIATMATAFMGYV, and FFAFHFVLPFVLIALSGVHLL. Heme b contacts are provided by His84 and His98. Residues His183 and His197 each contribute to the heme b site. His202 provides a ligand contact to a ubiquinone. 4 helical membrane-spanning segments follow: residues 225 to 245, 289 to 309, 324 to 344, and 349 to 369; these read FSWKDLLGFAXMILIFCTITL, LGGVVALVGSLIIPATMMLTH, VIFWLFCANFIALSWIGAAPV, and ITLGQVFSMLYFLFFLTAPMI.

It belongs to the cytochrome b family. As to quaternary structure, the main subunits of complex b-c1 are: cytochrome b, cytochrome c1 and the Rieske protein. The cofactor is heme b.

The protein localises to the mitochondrion inner membrane. Its function is as follows. Component of the ubiquinol-cytochrome c reductase complex (complex III or cytochrome b-c1 complex) that is part of the mitochondrial respiratory chain. The b-c1 complex mediates electron transfer from ubiquinol to cytochrome c. Contributes to the generation of a proton gradient across the mitochondrial membrane that is then used for ATP synthesis. The protein is Cytochrome b (mt:Cyt-b) of Xenoturbella bocki (Marine worm).